We begin with the raw amino-acid sequence, 863 residues long: Desmocollin-2 (863 aa).

The propeptide occupies 1–89 (KFIGRVNLKE…QEKVLRRAKR (89 aa)). Cadherin domains lie at 90–197 (RWAP…APIF), 198–309 (TETS…LPTF), 310–423 (TRSS…GPEC), 424–528 (DPRV…VIPQ), and 529–644 (RTVV…ILGK). Residues 90-644 (RWAPIPCSVP…TGNREVILGK (555 aa)) lie on the Extracellular side of the membrane. Asparagine 120 carries N-linked (GlcNAc...) asparagine glycosylation. Residues asparagine 346, asparagine 495, and asparagine 579 are each glycosylated (N-linked (GlcNAc...) asparagine). A helical membrane pass occupies residues 645-665 (WAILAILLGIALLFCILFTLV). Residues 666 to 863 (CGATTGADKK…RTLAETCMKR (198 aa)) are Cytoplasmic-facing. Residues serine 826, serine 830, and serine 835 each carry the phosphoserine modification.

Interacts with DSP, PKP2 and JUP. Interacts with DSG3; the interaction may limit the interaction of DSC3 with p38MAPK family members and therefore repress p38MAPK signaling activation. Expressed in esophagus and rumen. Weakly expressed in epithelia and cardiac muscle.

It localises to the cell membrane. The protein localises to the cell junction. Its subcellular location is the desmosome. Functionally, a component of desmosome cell-cell junctions which are required for positive regulation of cellular adhesion. Promotes timely incorporation of DSG2 into desmosome intercellular junctions and promotes interaction of desmosome cell junctions with intermediate filament cytokeratin, via modulation of DSP phosphorylation. Plays an important role in desmosome-mediated maintenance of intestinal epithelial cell intercellular adhesion strength and barrier function. Positively regulates wound healing of intestinal mucosa via promotion of epithelial cell migration, and also plays a role in mechanotransduction of force between intestinal epithelial cells and extracellular matrix. May contribute to epidermal cell positioning (stratification) by mediating differential adhesiveness between cells that express different isoforms. This is Desmocollin-2 (DSC2) from Bos taurus (Bovine).